Consider the following 296-residue polypeptide: Large ribosomal subunit protein uL15m (296 aa).

Residues 1–20 constitute a mitochondrion transit peptide; that stretch reads MSLIKKPGGKTIEVVKNLPR. Residues 25–59 form a disordered region; that stretch reads NLRPNPGAKTLEKRRGRGMHGGNRSGWGHKGERQR.

Belongs to the universal ribosomal protein uL15 family. As to quaternary structure, component of the mitochondrial ribosome large subunit (39S) which comprises a 16S rRNA and about 50 distinct proteins.

It is found in the mitochondrion. In Danio rerio (Zebrafish), this protein is Large ribosomal subunit protein uL15m (mrpl15).